We begin with the raw amino-acid sequence, 93 residues long: DNA-directed RNA polymerase subunit omega (93 aa).

This sequence belongs to the RNA polymerase subunit omega family. In terms of assembly, the RNAP catalytic core consists of 2 alpha, 1 beta, 1 beta' and 1 omega subunit. When a sigma factor is associated with the core the holoenzyme is formed, which can initiate transcription.

It carries out the reaction RNA(n) + a ribonucleoside 5'-triphosphate = RNA(n+1) + diphosphate. Promotes RNA polymerase assembly. Latches the N- and C-terminal regions of the beta' subunit thereby facilitating its interaction with the beta and alpha subunits. In Glaesserella parasuis serovar 5 (strain SH0165) (Haemophilus parasuis), this protein is DNA-directed RNA polymerase subunit omega.